The primary structure comprises 394 residues: RAB6A-GEF complex partner protein 2 (394 aa).

Belongs to the RGP1 family. Forms a complex with RIC1; the interaction enhances RAB6A GTPase activity. Interacts with RIC1. Interacts with RAB6A; the interaction is direct with a preference for RAB6A-GDP. Interacts with RAB33B.

The protein resides in the cytoplasm. Its subcellular location is the cytosol. The protein localises to the membrane. Its function is as follows. The RIC1-RGP1 complex acts as a guanine nucleotide exchange factor (GEF), which activates RAB6A by exchanging bound GDP for free GTP and may thereby required for efficient fusion of endosome-derived vesicles with the Golgi compartment. The RIC1-RGP1 complex participates in the recycling of mannose-6-phosphate receptors. This Bos taurus (Bovine) protein is RAB6A-GEF complex partner protein 2.